We begin with the raw amino-acid sequence, 201 residues long: 3-isopropylmalate dehydratase small subunit (201 aa).

Belongs to the LeuD family. LeuD type 1 subfamily. In terms of assembly, heterodimer of LeuC and LeuD.

It carries out the reaction (2R,3S)-3-isopropylmalate = (2S)-2-isopropylmalate. Its pathway is amino-acid biosynthesis; L-leucine biosynthesis; L-leucine from 3-methyl-2-oxobutanoate: step 2/4. In terms of biological role, catalyzes the isomerization between 2-isopropylmalate and 3-isopropylmalate, via the formation of 2-isopropylmaleate. In Shigella flexneri serotype 5b (strain 8401), this protein is 3-isopropylmalate dehydratase small subunit.